The primary structure comprises 1373 residues: Poly(A) RNA polymerase gld-2 homolog B (1373 aa).

The segment covering 75 to 91 (NSCHSSNSSSNTSNNNN) has biased composition (low complexity). 6 disordered regions span residues 75-155 (NSCH…QEKQ), 175-340 (SDCK…FWKT), 425-543 (PDST…QQQK), 734-770 (PQQQ…FADG), 802-866 (CGSG…ALGS), and 880-928 (HPLH…PTPV). The segment covering 96 to 112 (GQQQQPLHYCNSNNSHS) has biased composition (polar residues). 4 stretches are compositionally biased toward low complexity: residues 130–152 (QQQQ…QMQQ), 180–219 (SDSN…SCSN), 228–251 (NENS…NTSS), and 274–284 (ESGSSEGAAES). Polar residues-rich tracts occupy residues 295 to 340 (CNSN…FWKT) and 430 to 442 (KSSS…NMIR). Residues 443–485 (SSSNGNSNFSRHQYGHQSTGSGYQQQQQRYRNAQNVYQQYQHQ) show a composition bias toward low complexity. Over residues 486–502 (QQHHAQQHTHPHFRRKH) the composition is skewed to basic residues. Composition is skewed to low complexity over residues 735-753 (QQQQ…GTSS) and 819-844 (AGAL…SGTS). Over residues 855 to 866 (PSISPTPSALGS) the composition is skewed to polar residues. Over residues 880–890 (HPLHQQHPPSH) the composition is skewed to low complexity. The segment at 945-1373 (RYLAQARNIE…FAETTAAHVA (429 aa)) is sufficent for interaction with Dcr-2. Mg(2+) contacts are provided by D1029 and D1031. Residues 1211–1272 (TLGEHLLGFF…NIEEPFDLSN (62 aa)) form the PAP-associated domain. Residues 1320 to 1341 (LQQHQQQFEQQLHHPISGQQRS) show a composition bias toward low complexity. The segment at 1320–1359 (LQQHQQQFEQQLHHPISGQQRSAGGGGDGANPVPSTLNPD) is disordered.

This sequence belongs to the DNA polymerase type-B-like family. GLD2 subfamily. Interacts with orb, an RNA-binding protein, generating an ovarian cytoplasmic polyadenylation complex. Interacts (via C-terminus) with Dcr-2. Mg(2+) serves as cofactor. Mn(2+) is required as a cofactor. As to expression, expressed in ovaries. Not expressed in adult males.

The protein resides in the cytoplasm. The enzyme catalyses RNA(n) + ATP = RNA(n)-3'-adenine ribonucleotide + diphosphate. Its function is as follows. Cytoplasmic poly(A) RNA polymerase that adds successive AMP monomers to the 3'-end of specific maternal RNAs (bcd, Tl, and tor), forming a poly(A) tail, during late oogenesis and early embryogenesis. In contrast to the canonical nuclear poly(A) RNA polymerase, it only adds poly(A) to selected cytoplasmic mRNAs. Required for localization of mRNAs to both poles of the egg, to recruit or maintain known centrosomal proteins with two types of microtubule organizing centers (MTOCs): the central MTOC that forms between the meiosis II tandem spindles and the centrosomes of the mitotic spindle. Required at the final stage of oogenesis for meiosis I metaphase arrest and for progression beyond this stage. Functions with the RNA-binding protein Dcr-2 to promote cytoplasmic polyadenylation and translational activation of certain mRNAs such as Tl and r2d2. As a consequence, is involved in regulating Toll immune signaling and promoting resistance to fungal infection. The sequence is that of Poly(A) RNA polymerase gld-2 homolog B (wisp) from Drosophila melanogaster (Fruit fly).